A 183-amino-acid chain; its full sequence is Ribulose bisphosphate carboxylase small subunit, chloroplastic (183 aa).

Residues 1-59 (MASSMISSGTVATVSADRPAPAQARMVAPFNGLKSSSAFPVTRKSNDITSIASNGGRVQ) constitute a chloroplast transit peptide.

It belongs to the RuBisCO small chain family. Heterohexadecamer of 8 large and 8 small subunits.

The protein resides in the plastid. It is found in the chloroplast. RuBisCO catalyzes two reactions: the carboxylation of D-ribulose 1,5-bisphosphate, the primary event in carbon dioxide fixation, as well as the oxidative fragmentation of the pentose substrate. Both reactions occur simultaneously and in competition at the same active site. Although the small subunit is not catalytic it is essential for maximal activity. The polypeptide is Ribulose bisphosphate carboxylase small subunit, chloroplastic (Pyrus pyrifolia (Chinese pear)).